The following is a 1622-amino-acid chain: WD repeat-containing protein 97 (1622 aa).

6 WD repeats span residues 187 to 233, 290 to 329, 331 to 370, 552 to 592, 594 to 633, and 687 to 726; these read SEQG…RRLV, LHKT…RMVF, GHTG…QVGE, ELRC…TVFQ, EAHS…EESL, and DPTD…LRLL. 2 disordered regions span residues 1090–1112 and 1453–1472; these read GEKP…EDEE and LHPA…EETD. The stretch at 1094-1118 forms a coiled coil; the sequence is GEEGEEDKKEEEEEKEDEELDWALA. Residues 1096–1112 show a composition bias toward acidic residues; that stretch reads EGEEDKKEEEEEKEDEE.

This is WD repeat-containing protein 97 from Homo sapiens (Human).